Consider the following 359-residue polypeptide: Probably inactive receptor-like protein kinase At5g41680 (359 aa).

Positions 59 to 357 (AASAEILGKG…KLIQDIPTNF (299 aa)) constitute a Protein kinase domain. ATP is bound by residues 65 to 73 (LGKGAHVTT) and Lys-87.

Belongs to the protein kinase superfamily. Ser/Thr protein kinase family.

The protein is Probably inactive receptor-like protein kinase At5g41680 of Arabidopsis thaliana (Mouse-ear cress).